Consider the following 229-residue polypeptide: Ribonuclease T (229 aa).

Residues V23 to F197 form the Exonuclease domain. The Mg(2+) site is built by D26, E28, H184, and D189. H184 serves as the catalytic Proton donor/acceptor.

The protein belongs to the RNase T family. As to quaternary structure, homodimer. It depends on Mg(2+) as a cofactor.

Functionally, trims short 3' overhangs of a variety of RNA species, leaving a one or two nucleotide 3' overhang. Responsible for the end-turnover of tRNA: specifically removes the terminal AMP residue from uncharged tRNA (tRNA-C-C-A). Also appears to be involved in tRNA biosynthesis. This chain is Ribonuclease T, found in Haemophilus influenzae (strain PittEE).